The primary structure comprises 106 residues: Large ribosomal subunit protein uL24 (106 aa).

It belongs to the universal ribosomal protein uL24 family. Part of the 50S ribosomal subunit.

In terms of biological role, one of two assembly initiator proteins, it binds directly to the 5'-end of the 23S rRNA, where it nucleates assembly of the 50S subunit. Its function is as follows. One of the proteins that surrounds the polypeptide exit tunnel on the outside of the subunit. The sequence is that of Large ribosomal subunit protein uL24 from Azobacteroides pseudotrichonymphae genomovar. CFP2.